A 281-amino-acid chain; its full sequence is MSKPTIAFLGATGGCINACLAHTLQTGYHAVALARTPSKLTALLRTQNIDQETLDSRLRIVTGDATDPEAVKSTLLLQPGFPTDPTTSASSPTPTLVSHIISGIGATGNFRGWCFEFDQPHICEEATRALLTALRNIYATYPEFMLPANVKSRPLLTVLSGMGVDPSQKQMDVPFLLRRVYHGLLHVPHADKWVMEEMLAKREAREFFRGVITVRPGSLLTGDHMLGSGYGYEKVRVGTEREEPSVGWTIPRADVGEWVFREVVVMGGGRWVDEKVTLTCW.

This sequence belongs to the avfA family.

It participates in secondary metabolite biosynthesis. Functionally, oxidase; part of the gene cluster that mediates the biosynthesis of pyranonigrins, a family of antioxidative compounds. The first step of pyranonigrins biosynthesis is performed by the hybrid PKS-NRPS synthetase that condenses 6 malonyl-CoA units to an acetyl starter unit, to form a 1,3,5-trioxotetradecane-6,8-dienyl-ACP. The enoyl reductase (ER) domain of pynA is likely to be functional during the first two rounds of polyketide chain extension, to generate the saturated C-C bonds of the alkyl side chain. PynA subsequently forms the amide bond between the acyl chain and L-serine. Although pynA has a terminal reductase domain, it appears to require the thioesterase pynI for the release of the straight-chain intermediate from pynA via the formation of a tetramic acid pyranonigrin J. The methyltransferase pynC then coverts pyranonigrin J to pyranonigrin I via N-methylation. The FAD-dependent monooxygenase pynG catalyzes an epoxidation-mediated cyclization to form the dihydro-gamma-pyrone moiety, followed by pynD-catalyzed oxidation of the alcohol to the ketone and enolization to yield the characteristic tetramic acid-fused gamma-pyrone core of pyranonigrin H. Pyranonigrin H is substrate of pynH for dehydration-mediated exo-methylene formation from the serine side chain to produce pyranonigrin E, before the oxidase pynE reduces the exo-methylene of pyranonigrin E into a pendant methyl to form pyranonigrin G. The FAD-linked oxidoreductase pynB performs the reverse reaction and converts pyranonigrin G back to pyranonigrin E. This chain is Oxidase pynE, found in Aspergillus niger (strain ATCC MYA-4892 / CBS 513.88 / FGSC A1513).